Consider the following 428-residue polypeptide: 4-hydroxy-3-methylbut-2-en-1-yl diphosphate synthase (flavodoxin) (428 aa).

Positions 300, 303, 346, and 353 each coordinate [4Fe-4S] cluster.

It belongs to the IspG family. [4Fe-4S] cluster is required as a cofactor.

The catalysed reaction is (2E)-4-hydroxy-3-methylbut-2-enyl diphosphate + oxidized [flavodoxin] + H2O + 2 H(+) = 2-C-methyl-D-erythritol 2,4-cyclic diphosphate + reduced [flavodoxin]. It functions in the pathway isoprenoid biosynthesis; isopentenyl diphosphate biosynthesis via DXP pathway; isopentenyl diphosphate from 1-deoxy-D-xylulose 5-phosphate: step 5/6. In terms of biological role, converts 2C-methyl-D-erythritol 2,4-cyclodiphosphate (ME-2,4cPP) into 1-hydroxy-2-methyl-2-(E)-butenyl 4-diphosphate. This Methylobacillus flagellatus (strain ATCC 51484 / DSM 6875 / VKM B-1610 / KT) protein is 4-hydroxy-3-methylbut-2-en-1-yl diphosphate synthase (flavodoxin).